Reading from the N-terminus, the 244-residue chain is Carboxy-S-adenosyl-L-methionine synthase (244 aa).

S-adenosyl-L-methionine is bound by residues Tyr41, 66–68, 91–92, 119–120, Asn134, and Arg201; these read GCS, DN, and DI.

Belongs to the class I-like SAM-binding methyltransferase superfamily. Cx-SAM synthase family. In terms of assembly, homodimer.

The enzyme catalyses prephenate + S-adenosyl-L-methionine = carboxy-S-adenosyl-L-methionine + 3-phenylpyruvate + H2O. In terms of biological role, catalyzes the conversion of S-adenosyl-L-methionine (SAM) to carboxy-S-adenosyl-L-methionine (Cx-SAM). This Photobacterium profundum (strain SS9) protein is Carboxy-S-adenosyl-L-methionine synthase.